The sequence spans 482 residues: MRAMPLSIGTIHFVGIGGIGMSGIAEVLHNLGYSVQGSDIADNYNVARLRTLGIRVEIGHRAENLGEAAVVVISSAVRTDNPEVVAARAALVPVVRRAEMLAELMRLKWSVAVAGTHGKTTTTSMVAALLDGAGFDPTIINGGIINALGTNARLGSGDWMVVEADESDGTFTKLPATIAVVTNMDPEHLDFYGTFEKEREAFDRFVENIPFYGFAALCTDHPEVQALVARADRRIVTYGFNPQADVRAVNVEGDHRGAFYDVQVSERVTGEARTIERVHLPMYGLHNVQNSLAAIAVAINMGIADEQIRASFARFSGVKRRFTRTGESNGVVVIDDYGHHPVEIQAVLKAARMAGSGRTIAVVQPHRYSRLSSLFEEFCTCFNDADAVIVADVYAAGEQPVEGASKEALVEGLRTHGHRNVQALPSPEALAGIVRELAQPGDMVVCLGAGSITGWANRLPAELDALHGISGGTAPAAKAGGT.

115–121 (GTHGKTT) is an ATP binding site.

The protein belongs to the MurCDEF family.

The protein localises to the cytoplasm. The enzyme catalyses UDP-N-acetyl-alpha-D-muramate + L-alanine + ATP = UDP-N-acetyl-alpha-D-muramoyl-L-alanine + ADP + phosphate + H(+). It participates in cell wall biogenesis; peptidoglycan biosynthesis. Functionally, cell wall formation. The sequence is that of UDP-N-acetylmuramate--L-alanine ligase from Rhodospirillum centenum (strain ATCC 51521 / SW).